We begin with the raw amino-acid sequence, 691 residues long: Zinc finger protein 770 (691 aa).

Residue Lys-11 forms a Glycyl lysine isopeptide (Lys-Gly) (interchain with G-Cter in SUMO2) linkage. 3 C2H2-type zinc fingers span residues 27–49 (YVCN…YLIH), 55–77 (FECD…QLTH), and 81–103 (FKCS…QQLH). Glycyl lysine isopeptide (Lys-Gly) (interchain with G-Cter in SUMO2) cross-links involve residues Lys-112, Lys-121, and Lys-146. 3 C2H2-type zinc fingers span residues 160–182 (HACT…VLIH), 188–210 (FKCV…QLTH), and 216–238 (FQCC…KQIH). A disordered region spans residues 258–277 (PLPNKLNANQGGFENGEIGE). Lys-262 is covalently cross-linked (Glycyl lysine isopeptide (Lys-Gly) (interchain with G-Cter in SUMO2)). Residues 294-318 (FQCPKCEKCFESEQILNEHSCFAAR) form a C2H2-type 7; degenerate zinc finger. Residues Lys-420 and Lys-437 each participate in a glycyl lysine isopeptide (Lys-Gly) (interchain with G-Cter in SUMO2) cross-link. C2H2-type zinc fingers lie at residues 475 to 497 (CPCD…YLIH), 503 to 525 (FGCN…EQTH), 625 to 647 (YRCS…YLIH), and 653 to 675 (FECS…QLTH). Lys-683 is covalently cross-linked (Glycyl lysine isopeptide (Lys-Gly) (interchain with G-Cter in SUMO2)).

This sequence belongs to the krueppel C2H2-type zinc-finger protein family.

Its subcellular location is the nucleus. Functionally, may be involved in transcriptional regulation. This is Zinc finger protein 770 (ZNF770) from Homo sapiens (Human).